The primary structure comprises 367 residues: 2-aminoethylphosphonate--pyruvate transaminase (367 aa).

Position 194 is an N6-(pyridoxal phosphate)lysine (Lys194).

This sequence belongs to the class-V pyridoxal-phosphate-dependent aminotransferase family. PhnW subfamily. In terms of assembly, homodimer. It depends on pyridoxal 5'-phosphate as a cofactor.

It catalyses the reaction (2-aminoethyl)phosphonate + pyruvate = phosphonoacetaldehyde + L-alanine. In terms of biological role, involved in phosphonate degradation. The chain is 2-aminoethylphosphonate--pyruvate transaminase from Salmonella agona (strain SL483).